The primary structure comprises 231 residues: Large ribosomal subunit protein uL3 (231 aa).

Q151 bears the N5-methylglutamine mark.

The protein belongs to the universal ribosomal protein uL3 family. Part of the 50S ribosomal subunit. Forms a cluster with proteins L14 and L19. Post-translationally, methylated by PrmB.

One of the primary rRNA binding proteins, it binds directly near the 3'-end of the 23S rRNA, where it nucleates assembly of the 50S subunit. This Ehrlichia canis (strain Jake) protein is Large ribosomal subunit protein uL3.